Here is a 354-residue protein sequence, read N- to C-terminus: Replication-associated protein (354 aa).

Residues 11–114 (SHRSPNTFLT…PLALFERGTF (104 aa)) form the CRESS-DNA virus Rep endonuclease domain. Positions 18 to 21 (FLTY) match the RCR-1 motif. Residues E52 and H62 each contribute to the a divalent metal cation site. Positions 60-65 (CLHALI) match the RCR-2 motif. The For DNA cleavage activity role is filled by Y100. The RCR-3 signature appears at 100-103 (YITK). Residue E104 coordinates a divalent metal cation. The oligomerization stretch occupies residues 175 to 187 (SANKLFPDIQEEF). 228-235 (GPTRTGKS) contacts ATP. A transactivation region spans residues 251-269 (VDWSSYNEDTIYNIVDDIP). The Nuclear localization signal motif lies at 291-302 (KYGKKKKVQMKS).

This sequence belongs to the geminiviridae Rep protein family. In terms of assembly, homooligomer. Rep binds to repeated DNA motifs (iterons). Forms the O-complex, which is a Rep-DNA complex involved in the initiation of RCR. Part of the C- and V-complexes which are RepA-Rep-DNA complexes involved in the c-sense and v-sense transcription. The cofactor is Mg(2+). It depends on Mn(2+) as a cofactor.

Its subcellular location is the host nucleus. Its function is as follows. Essential for the replication of viral ssDNA. The closed circular ssDNA genome is first converted to a superhelical dsDNA. Rep binds a specific region at the genome origin of replication. It introduces an endonucleolytic nick within the conserved sequence 5'-TAATATTAC-3' in the intergenic region of the genome present in all geminiviruses, thereby initiating the rolling circle replication (RCR). Following cleavage, binds covalently to the 5'-phosphate of DNA as a tyrosyl ester. The cleavage gives rise to a free 3'-OH that serves as a primer for the cellular DNA polymerase. The polymerase synthesizes the (+) strand DNA by rolling circle mechanism. After one round of replication, a Rep-catalyzed nucleotidyl transfer reaction releases a circular single-stranded virus genome, thereby terminating the replication. Displays origin-specific DNA cleavage, nucleotidyl transferase, ATPase and helicase activities. Acts as an inhibitor of C-sense gene transcription. The polypeptide is Replication-associated protein (Maize streak virus genotype C (isolate Set) (MSV)).